Consider the following 362-residue polypeptide: Biotin synthase (362 aa).

The Radical SAM core domain maps to 70–305; sequence CCGNVVDLCS…QQIIRYAGGR (236 aa). Residues Cys-88, Cys-92, and Cys-95 each coordinate [4Fe-4S] cluster. Cys-133, Cys-170, Cys-230, and Arg-300 together coordinate [2Fe-2S] cluster.

The protein belongs to the radical SAM superfamily. Biotin synthase family. In terms of assembly, homodimer. [4Fe-4S] cluster serves as cofactor. The cofactor is [2Fe-2S] cluster.

It carries out the reaction (4R,5S)-dethiobiotin + (sulfur carrier)-SH + 2 reduced [2Fe-2S]-[ferredoxin] + 2 S-adenosyl-L-methionine = (sulfur carrier)-H + biotin + 2 5'-deoxyadenosine + 2 L-methionine + 2 oxidized [2Fe-2S]-[ferredoxin]. The protein operates within cofactor biosynthesis; biotin biosynthesis; biotin from 7,8-diaminononanoate: step 2/2. Catalyzes the conversion of dethiobiotin (DTB) to biotin by the insertion of a sulfur atom into dethiobiotin via a radical-based mechanism. The chain is Biotin synthase from Synechocystis sp. (strain ATCC 27184 / PCC 6803 / Kazusa).